The primary structure comprises 119 residues: Non-specific lipid-transfer protein 11 (119 aa).

The N-terminal stretch at 1-28 (MRNITTTTRKMLLLVITILLGIAYHGEA) is a signal peptide. 4 disulfides stabilise this stretch: cysteine 31/cysteine 78, cysteine 41/cysteine 55, cysteine 56/cysteine 101, and cysteine 76/cysteine 115.

This sequence belongs to the plant LTP family.

Its function is as follows. Plant non-specific lipid-transfer proteins transfer phospholipids as well as galactolipids across membranes. May play a role in wax or cutin deposition in the cell walls of expanding epidermal cells and certain secretory tissues. The chain is Non-specific lipid-transfer protein 11 (LTP11) from Arabidopsis thaliana (Mouse-ear cress).